A 203-amino-acid chain; its full sequence is Probable metallo-hydrolase MJ0296 (203 aa).

The Zn(2+) site is built by His86, His88, Asp90, His91, His135, Asp152, and His193.

The protein belongs to the metallo-beta-lactamase superfamily. Zn(2+) is required as a cofactor.

The chain is Probable metallo-hydrolase MJ0296 from Methanocaldococcus jannaschii (strain ATCC 43067 / DSM 2661 / JAL-1 / JCM 10045 / NBRC 100440) (Methanococcus jannaschii).